We begin with the raw amino-acid sequence, 156 residues long: Small ribosomal subunit protein uS7 (156 aa).

Belongs to the universal ribosomal protein uS7 family. In terms of assembly, part of the 30S ribosomal subunit. Contacts proteins S9 and S11.

In terms of biological role, one of the primary rRNA binding proteins, it binds directly to 16S rRNA where it nucleates assembly of the head domain of the 30S subunit. Is located at the subunit interface close to the decoding center, probably blocks exit of the E-site tRNA. The chain is Small ribosomal subunit protein uS7 from Listeria innocua serovar 6a (strain ATCC BAA-680 / CLIP 11262).